Here is a 255-residue protein sequence, read N- to C-terminus: NAD kinase (255 aa).

D44 functions as the Proton acceptor in the catalytic mechanism. Residues 44 to 45 (DG), H49, 114 to 115 (NE), D144, A152, 155 to 160 (SAYNLS), and Q216 each bind NAD(+).

Belongs to the NAD kinase family. A divalent metal cation serves as cofactor.

Its subcellular location is the cytoplasm. It catalyses the reaction NAD(+) + ATP = ADP + NADP(+) + H(+). Involved in the regulation of the intracellular balance of NAD and NADP, and is a key enzyme in the biosynthesis of NADP. Catalyzes specifically the phosphorylation on 2'-hydroxyl of the adenosine moiety of NAD to yield NADP. This chain is NAD kinase, found in Rickettsia typhi (strain ATCC VR-144 / Wilmington).